We begin with the raw amino-acid sequence, 193 residues long: uncharacterized protein (193 aa).

The first 14 residues, Met1–Ser14, serve as a signal peptide directing secretion.

This is an uncharacterized protein from Saccharomyces cerevisiae (strain ATCC 204508 / S288c) (Baker's yeast).